A 568-amino-acid polypeptide reads, in one-letter code: MAGUK p55 subfamily member 3 (568 aa).

L27 domains are found at residues 6 to 60 (EDSG…ERQS) and 61 to 118 (PTPV…FDPV). The region spanning 137–218 (IVRLVKNKEP…SITLKIIPAT (82 aa)) is the PDZ domain. An SH3 domain is found at 226–296 (DSKVFMRALF…PSKQFQERRL (71 aa)). Ser307 is modified (phosphoserine). Positions 385 to 568 (PRLVVLIGSL…QEPAASSELS (184 aa)) constitute a Guanylate kinase-like domain.

This sequence belongs to the MAGUK family. As to quaternary structure, interacts with HTR2C; this interaction stabilizes the receptor at the plasma membrane and prevents the desensitization of the HTR2C receptor-mediated calcium response. Interacts with HTR2A. Interacts with HTR4. Interacts (via PDZ domain) with CADM1 (via C-terminus)Interacts (via PDZ domain) with CADM1; this interaction connects CADM1 with DLG1. Interacts (via Guanylate kinase-like domain) with PALS1. Interacts with DLG1 (via N-terminus); this interaction connects CADM1 with DLG1 and links CADM1 with the regulatory subunit of phosphoinositide-3-kinase (PI3K) by forming a multiprotein complex and participates in cell spreading. As to expression, expressed in brain, skeletal muscle, testis, kidney, and lung.

Its subcellular location is the apical cell membrane. It localises to the cell membrane. The protein localises to the cell junction. It is found in the adherens junction. In terms of biological role, participates in cell spreading through the phosphoinositide-3-kinase (PI3K) pathway by connecting CADM1 to DLG1 and the regulatory subunit of phosphoinositide-3-kinase (PI3K). Stabilizes HTR2C at the plasma membrane and prevents its desensitization. May participates in the maintenance of adherens junctions. This chain is MAGUK p55 subfamily member 3, found in Mus musculus (Mouse).